Reading from the N-terminus, the 418-residue chain is Cell division protein FtsZ (418 aa).

GTP is bound by residues 27 to 31 (GGGSN), 114 to 116 (GTG), Glu-145, Lys-149, and Asp-193. The tract at residues 386-418 (KNGVKGHTFGVPLPSVNEDLDEPTFLRNRNKGL) is disordered.

It belongs to the FtsZ family. Homodimer. Polymerizes to form a dynamic ring structure in a strictly GTP-dependent manner. Interacts directly with several other division proteins.

The protein resides in the cytoplasm. Essential cell division protein that forms a contractile ring structure (Z ring) at the future cell division site. The regulation of the ring assembly controls the timing and the location of cell division. One of the functions of the FtsZ ring is to recruit other cell division proteins to the septum to produce a new cell wall between the dividing cells. Binds GTP and shows GTPase activity. In Treponema pallidum (strain Nichols), this protein is Cell division protein FtsZ.